Here is a 334-residue protein sequence, read N- to C-terminus: Ribosomal RNA small subunit methyltransferase H (334 aa).

The interval 1–21 (MNALPIRTAAPSGHSGGHSST) is disordered. S-adenosyl-L-methionine is bound by residues 52–54 (GGY), D71, F98, D119, and Q126.

It belongs to the methyltransferase superfamily. RsmH family.

The protein resides in the cytoplasm. The enzyme catalyses cytidine(1402) in 16S rRNA + S-adenosyl-L-methionine = N(4)-methylcytidine(1402) in 16S rRNA + S-adenosyl-L-homocysteine + H(+). Functionally, specifically methylates the N4 position of cytidine in position 1402 (C1402) of 16S rRNA. The protein is Ribosomal RNA small subunit methyltransferase H of Granulibacter bethesdensis (strain ATCC BAA-1260 / CGDNIH1).